We begin with the raw amino-acid sequence, 518 residues long: Dihydropyrimidinase 2 (518 aa).

Zn(2+) contacts are provided by H59, H61, and K152. The residue at position 152 (K152) is an N6-carboxylysine. Y157 provides a ligand contact to substrate. Positions 185 and 241 each coordinate Zn(2+). Substrate is bound at residue S291. D319 serves as a coordination point for Zn(2+). Substrate is bound at residue N340.

It belongs to the metallo-dependent hydrolases superfamily. Hydantoinase/dihydropyrimidinase family. In terms of assembly, homotetramer. Zn(2+) is required as a cofactor. Post-translationally, carboxylation allows a single lysine to coordinate two zinc ions.

It catalyses the reaction 5,6-dihydrouracil + H2O = 3-(carbamoylamino)propanoate + H(+). This chain is Dihydropyrimidinase 2 (dhp-2), found in Caenorhabditis briggsae.